Consider the following 174-residue polypeptide: Shikimate kinase 2 (174 aa).

Residue 12–17 coordinates ATP; that stretch reads GCGKTT. Mg(2+)-binding residues include threonine 16 and aspartate 32. Substrate contacts are provided by aspartate 34, arginine 58, and glycine 79. The tract at residues 112-126 is LID domain; sequence QAAPEEDLRPTLTGK. Arginine 120 is a binding site for ATP. Arginine 139 contacts substrate.

The protein belongs to the shikimate kinase family. AroL subfamily. Monomer. Requires Mg(2+) as cofactor.

The protein localises to the cytoplasm. The enzyme catalyses shikimate + ATP = 3-phosphoshikimate + ADP + H(+). It participates in metabolic intermediate biosynthesis; chorismate biosynthesis; chorismate from D-erythrose 4-phosphate and phosphoenolpyruvate: step 5/7. In terms of biological role, catalyzes the specific phosphorylation of the 3-hydroxyl group of shikimic acid using ATP as a cosubstrate. The chain is Shikimate kinase 2 from Shigella dysenteriae serotype 1 (strain Sd197).